Reading from the N-terminus, the 479-residue chain is Anaerobic nitric oxide reductase flavorubredoxin (479 aa).

Residues 30–210 form a zinc metallo-hydrolase region; it reads LRGSSYNSYL…PFSRLVTPKI (181 aa). Fe cation-binding residues include histidine 79, glutamate 81, aspartate 83, histidine 147, aspartate 166, and histidine 227. One can recognise a Flavodoxin-like domain in the interval 254–393; sequence ITIFYDTMSN…LCREHGREIA (140 aa). FMN contacts are provided by residues 260–264 and 342–369; these read TMSNN and AFGS…EMSL. The Rubredoxin-like domain maps to 423–474; it reads GPRMQCSVCQWIYDPAKGEPMQDVAPGTPWSEVPDNFLCPECSLGKDVFDEL. Cysteine 428, cysteine 431, cysteine 461, and cysteine 464 together coordinate Fe cation.

This sequence in the N-terminal section; belongs to the zinc metallo-hydrolase group 3 family. In terms of assembly, homotetramer. Fe cation serves as cofactor. It depends on FMN as a cofactor.

The protein resides in the cytoplasm. It participates in nitrogen metabolism; nitric oxide reduction. Its function is as follows. Anaerobic nitric oxide reductase; uses NADH to detoxify nitric oxide (NO), protecting several 4Fe-4S NO-sensitive enzymes. Has at least 2 reductase partners, only one of which (NorW, flavorubredoxin reductase) has been identified. NO probably binds to the di-iron center; electrons enter from the NorW at rubredoxin and are transferred sequentially to the FMN center and the di-iron center. Also able to function as an aerobic oxygen reductase. This is Anaerobic nitric oxide reductase flavorubredoxin from Shigella flexneri serotype 5b (strain 8401).